The sequence spans 275 residues: Methylesterase 10 (275 aa).

S96 acts as the Acyl-ester intermediate in catalysis. Residues D225 and H253 each act as charge relay system in the active site.

The protein belongs to the AB hydrolase superfamily. Methylesterase family.

The catalysed reaction is methyl (-)-jasmonate + H2O = jasmonate + methanol + H(+). It functions in the pathway plant hormone biosynthesis. The protein operates within lipid metabolism; oxylipin biosynthesis. Its function is as follows. Methylesterase shown to have methyl jasmonate (MeJA) esterase activity in vitro. The chain is Methylesterase 10 from Arabidopsis thaliana (Mouse-ear cress).